A 318-amino-acid chain; its full sequence is Beta-ketoacyl-[acyl-carrier-protein] synthase III (318 aa).

Residues cysteine 112 and histidine 245 contribute to the active site. Residues 246 to 250 (QANIR) are ACP-binding. Asparagine 275 is a catalytic residue.

It belongs to the thiolase-like superfamily. FabH family. As to quaternary structure, homodimer.

The protein resides in the cytoplasm. It catalyses the reaction malonyl-[ACP] + acetyl-CoA + H(+) = 3-oxobutanoyl-[ACP] + CO2 + CoA. It functions in the pathway lipid metabolism; fatty acid biosynthesis. Catalyzes the condensation reaction of fatty acid synthesis by the addition to an acyl acceptor of two carbons from malonyl-ACP. Catalyzes the first condensation reaction which initiates fatty acid synthesis and may therefore play a role in governing the total rate of fatty acid production. Possesses both acetoacetyl-ACP synthase and acetyl transacylase activities. Its substrate specificity determines the biosynthesis of branched-chain and/or straight-chain of fatty acids. This chain is Beta-ketoacyl-[acyl-carrier-protein] synthase III, found in Nitrosomonas europaea (strain ATCC 19718 / CIP 103999 / KCTC 2705 / NBRC 14298).